We begin with the raw amino-acid sequence, 378 residues long: Integrator complex assembly factor WDR73 (378 aa).

WD repeat units follow at residues 73 to 113 (DFKV…VWQV), 121 to 163 (KAVS…VVDL), 167 to 205 (KTTY…LVDT), 214 to 255 (NRSP…LLDP), 266 to 305 (QCPV…VYDA), and 322 to 371 (EPLF…VWDW).

Belongs to the WD repeat WDR73 family. Interacts with INTS9 and INTS11; the interaction is direct. Part of the multiprotein complex composed of BRAT1, WDR73, as well as integrator complex subunits INTS9 and INTS11. Expressed in kidney and brain. In the kidney, expressed in glomeruli, most probably in podocytes, and in tubules (at protein level). In the brain, expressed in the cerebellum, with high levels in Purkinje cells and their projecting axons, in the deep cerebellar nuclei and in pyramidal neurons of the cerebral cortex (at protein level). In the white matter, mainly present in astrocytes, but not in oligodendrocytes (at protein level). Also highly expressed in endothelial cells of cerebral capillaries (at protein level).

The protein localises to the cytoplasm. It localises to the cytoskeleton. The protein resides in the spindle. Its subcellular location is the spindle pole. It is found in the cleavage furrow. In terms of biological role, component of a multiprotein complex required for the assembly of the RNA endonuclease module of the integrator complex. Associates with INTS9 and INTS11 in the cytoplasm, stabilizing the INTS9-INTS11 heterodimer and blocking the active site of INTS11. BRAT1 then joins the complex and plugs the active site of INTS11, leading to WDR73 release and nuclear import of INTS9 and INTS11. This is Integrator complex assembly factor WDR73 from Homo sapiens (Human).